The primary structure comprises 606 residues: Protein spire homolog 2 (606 aa).

A KIND domain is found at 21 to 219; sequence LSLEEVLKSY…RALFLETLEL (199 aa). The tract at residues 147-181 is disordered; the sequence is KHCGSNAAKDEGYSGQDEEEEEEEEEEEEGAGRGI. Residues 162–175 are compositionally biased toward acidic residues; it reads QDEEEEEEEEEEEE. 2 WH2 domains span residues 263–277 and 357–374; these read QLMK…LKKV and LHDR…LRPV. Disordered stretches follow at residues 438 to 464 and 517 to 537; these read DEDS…RSFS and CRSL…ASHG. A compositionally biased stretch (basic and acidic residues) spans 445–464; it reads VDMRRVESSPTPLKRDRSFS. The interval 554-574 is spir-box; sequence LALTVDGVINVRRILVKAEME.

It belongs to the spire family.

Its subcellular location is the cytoplasm. It is found in the cytoskeleton. It localises to the cytosol. The protein localises to the cell membrane. The protein resides in the cytoplasmic vesicle membrane. Functionally, acts as an actin nucleation factor, remains associated with the slow-growing pointed end of the new filament. Involved in intracellular vesicle transport along actin fibers, providing a novel link between actin cytoskeleton dynamics and intracellular transport. Required for asymmetric spindle positioning and asymmetric cell division during oocyte meiosis. Required for normal formation of the cleavage furrow and for polar body extrusion during female germ cell meiosis. Also acts in the nucleus: together with SPIRE1 and SPIRE2, promotes assembly of nuclear actin filaments in response to DNA damage in order to facilitate movement of chromatin and repair factors after DNA damage. The polypeptide is Protein spire homolog 2 (spire2) (Danio rerio (Zebrafish)).